The chain runs to 493 residues: Tripartite motif-containing protein 5 (493 aa).

At alanine 2 the chain carries N-acetylalanine. Residues 15-59 (CPICLELLTQPLSLDCGHSFCQACLTANHKKSTLDKGERSCPVCR) form an RING-type zinc finger. Residue serine 86 is modified to Phosphoserine. The segment at 90-132 (QKVDHCARHGEKLLLFCKEDGKVICWLCERSQEHRGHHTFLTE) adopts a B box-type zinc-finger fold. Zn(2+)-binding residues include cysteine 95, histidine 98, cysteine 117, and histidine 123. A coiled-coil region spans residues 131-223 (TEEVAQKYQV…LTKSETEMVQ (93 aa)). The tract at residues 185 to 198 (FEQLRDILDWEESN) is required for interaction with GABARAP and for autophagy. A B30.2/SPRY domain is found at 281–493 (LKGMLEVFRE…VPMTLCSPSS (213 aa)).

This sequence belongs to the TRIM/RBCC family. As to quaternary structure, can form homodimers and homotrimers. In addition to lower-order dimerization, also exhibits a higher-order multimerization and both low- and high-order multimerizations are essential for its restriction activity. Interacts with BTBD1 and BTBD2. Interacts with PSMC4, PSMC5, PSMD7 and HSPA8/HSC70. Interacts (via B30.2/SPRY domain) with HSPA1A/B. Interacts with PSMC2, MAP3K7/TAK1, TAB2 and TAB3. Interacts with SQSTM1. Interacts with TRIM6 and TRIM34. Interacts with ULK1 (phosphorylated form), GABARAP, GABARAPL1, GABARAPL2, MAP1LC3A, MAP1LC3C and BECN1. In terms of processing, degraded in a proteasome-independent fashion in the absence of viral infection but in a proteasome-dependent fashion following exposure to restriction sensitive virus. Autoubiquitinated in a RING finger- and UBE2D2-dependent manner. Monoubiquitinated by TRIM21. Deubiquitinated by Yersinia YopJ. Ubiquitination may not lead to proteasomal degradation.

It localises to the cytoplasm. Its subcellular location is the nucleus. It carries out the reaction S-ubiquitinyl-[E2 ubiquitin-conjugating enzyme]-L-cysteine + [acceptor protein]-L-lysine = [E2 ubiquitin-conjugating enzyme]-L-cysteine + N(6)-ubiquitinyl-[acceptor protein]-L-lysine.. The protein operates within protein modification; protein ubiquitination. Its function is as follows. Capsid-specific restriction factor that prevents infection from non-host-adapted retroviruses. Blocks viral replication early in the life cycle, after viral entry but before reverse transcription. In addition to acting as a capsid-specific restriction factor, also acts as a pattern recognition receptor that activates innate immune signaling in response to the retroviral capsid lattice. Binding to the viral capsid triggers its E3 ubiquitin ligase activity, and in concert with the heterodimeric ubiquitin conjugating enzyme complex UBE2V1-UBE2N (also known as UBC13-UEV1A complex) generates 'Lys-63'-linked polyubiquitin chains, which in turn are catalysts in the autophosphorylation of the MAP3K7/TAK1 complex (includes TAK1, TAB2, and TAB3). Activation of the MAP3K7/TAK1 complex by autophosphorylation results in the induction and expression of NF-kappa-B and MAPK-responsive inflammatory genes, thereby leading to an innate immune response in the infected cell. Plays a role in regulating autophagy through activation of autophagy regulator BECN1 by causing its dissociation from its inhibitors BCL2 and TAB2. The polypeptide is Tripartite motif-containing protein 5 (TRIM5) (Pongo pygmaeus (Bornean orangutan)).